The following is a 483-amino-acid chain: UDP-N-acetylmuramoyl-L-alanyl-D-glutamate--2,6-diaminopimelate ligase (483 aa).

Residue Ser29 participates in UDP-N-acetyl-alpha-D-muramoyl-L-alanyl-D-glutamate binding. Gly112–Thr118 contacts ATP. UDP-N-acetyl-alpha-D-muramoyl-L-alanyl-D-glutamate-binding positions include Thr154–Thr155, Ser181, and Arg189. Lys221 is subject to N6-carboxylysine. Meso-2,6-diaminopimelate contacts are provided by residues Arg380, Asp404 to Arg407, Gly454, and Glu458. A Meso-diaminopimelate recognition motif motif is present at residues Asp404–Arg407.

The protein belongs to the MurCDEF family. MurE subfamily. The cofactor is Mg(2+). In terms of processing, carboxylation is probably crucial for Mg(2+) binding and, consequently, for the gamma-phosphate positioning of ATP.

Its subcellular location is the cytoplasm. It catalyses the reaction UDP-N-acetyl-alpha-D-muramoyl-L-alanyl-D-glutamate + meso-2,6-diaminopimelate + ATP = UDP-N-acetyl-alpha-D-muramoyl-L-alanyl-gamma-D-glutamyl-meso-2,6-diaminopimelate + ADP + phosphate + H(+). It participates in cell wall biogenesis; peptidoglycan biosynthesis. Its function is as follows. Catalyzes the addition of meso-diaminopimelic acid to the nucleotide precursor UDP-N-acetylmuramoyl-L-alanyl-D-glutamate (UMAG) in the biosynthesis of bacterial cell-wall peptidoglycan. This is UDP-N-acetylmuramoyl-L-alanyl-D-glutamate--2,6-diaminopimelate ligase from Clostridium botulinum (strain ATCC 19397 / Type A).